The following is a 775-amino-acid chain: Transcription activator of gluconeogenesis HCBG_00867 (775 aa).

Residues 1–70 (MTASTQNGSP…NAKDPLRPRR (70 aa)) are disordered. 2 stretches are compositionally biased toward polar residues: residues 21 to 41 (NQES…QSPA) and 48 to 60 (TAES…STAA). A DNA-binding region (zn(2)-C6 fungal-type) is located at residues 77–105 (CFACQRAHLTCGDERPCQRCIKRGLQDAC). 4 disordered regions span residues 179 to 248 (TQAK…PFGA), 286 to 351 (GAGD…NIYN), 556 to 592 (NLNV…AGGG), and 649 to 725 (QGKE…SPKQ). A compositionally biased stretch (polar residues) spans 195 to 217 (MQDTSINPSAFQAPSPTSTPNFD). Residues 218–229 (LSSNPPNRNLSS) are compositionally biased toward low complexity. 4 stretches are compositionally biased toward polar residues: residues 230-244 (AMTQ…QTQD), 292-323 (PSDS…TQSP), 334-351 (WNPS…NIYN), and 557-576 (LNVN…TPRN). A compositionally biased stretch (gly residues) spans 657-668 (GSDGKGGGGGGD). Over residues 669-713 (VAATAATTSTSTSNGANSSGHANANRNNTNPKNSSPPSSSSAAAA) the composition is skewed to low complexity.

This sequence belongs to the ERT1/acuK family.

It localises to the nucleus. In terms of biological role, transcription factor which regulates nonfermentable carbon utilization. Activator of gluconeogenetic genes. This chain is Transcription activator of gluconeogenesis HCBG_00867, found in Ajellomyces capsulatus (strain G186AR / H82 / ATCC MYA-2454 / RMSCC 2432) (Darling's disease fungus).